Reading from the N-terminus, the 85-residue chain is Large ribosomal subunit protein eL43 (85 aa).

The segment at 38–59 (CPVCGRKAVRRISTGIWQCQKC) adopts a C4-type zinc-finger fold.

It belongs to the eukaryotic ribosomal protein eL43 family. It depends on Zn(2+) as a cofactor.

This chain is Large ribosomal subunit protein eL43, found in Thermococcus sibiricus (strain DSM 12597 / MM 739).